The primary structure comprises 255 residues: 3-deoxy-manno-octulosonate cytidylyltransferase (255 aa).

This sequence belongs to the KdsB family.

It localises to the cytoplasm. It catalyses the reaction 3-deoxy-alpha-D-manno-oct-2-ulosonate + CTP = CMP-3-deoxy-beta-D-manno-octulosonate + diphosphate. Its pathway is nucleotide-sugar biosynthesis; CMP-3-deoxy-D-manno-octulosonate biosynthesis; CMP-3-deoxy-D-manno-octulosonate from 3-deoxy-D-manno-octulosonate and CTP: step 1/1. It functions in the pathway bacterial outer membrane biogenesis; lipopolysaccharide biosynthesis. In terms of biological role, activates KDO (a required 8-carbon sugar) for incorporation into bacterial lipopolysaccharide in Gram-negative bacteria. The protein is 3-deoxy-manno-octulosonate cytidylyltransferase of Thermodesulfovibrio yellowstonii (strain ATCC 51303 / DSM 11347 / YP87).